A 440-amino-acid polypeptide reads, in one-letter code: Actin-like protein 7A (440 aa).

The segment at 1–27 is disordered; the sequence is MSLDAVWAPQTANIGDGPAKKASDQTS. The required for interaction with TES stretch occupies residues 36 to 56; sequence ASLRDGPAKRAVWVRRDNAEK.

The protein belongs to the actin family. As to quaternary structure, interacts (via N-terminus) with TES (via LIM domain 2). Heterodimer with TES; the heterodimer interacts with ENAH to form a heterotrimer. Interacts with ACTL9. Interacts with CYLC1; the interaction may be relevant for proper acrosome attachment to the nuclear envelope. As to expression, detected in testis. Detected at the acrosome of round spermatids (at protein level).

The protein resides in the cytoplasm. Its subcellular location is the cytoskeleton. The protein localises to the golgi apparatus. It localises to the nucleus. Essential for normal spermatogenesis and male fertility. Required for normal sperm head morphology, acroplaxome formation, acrosome attachment, and acrosome granule stability. May anchor and stabilize acrosomal adherence to the acroplaxome at least in part by facilitating the presence of F-actin in the subacrosomal space. May play an important role in formation and fusion of Golgi-derived vesicles during acrosome biogenesis. The polypeptide is Actin-like protein 7A (Actl7a) (Rattus norvegicus (Rat)).